We begin with the raw amino-acid sequence, 190 residues long: Elongation factor P-like protein (190 aa).

The protein belongs to the elongation factor P family.

This is Elongation factor P-like protein from Serratia proteamaculans (strain 568).